Consider the following 250-residue polypeptide: Tetrahydromethanopterin S-methyltransferase subunit D (250 aa).

Helical transmembrane passes span I9–V29, G47–M67, I86–V106, I144–V164, L184–S204, and L230–I250.

This sequence belongs to the MtrD family. In terms of assembly, the complex is composed of 8 subunits; MtrA, MtrB, MtrC, MtrD, MtrE, MtrF, MtrG and MtrH.

The protein resides in the cell membrane. The enzyme catalyses 5-methyl-5,6,7,8-tetrahydromethanopterin + coenzyme M + 2 Na(+)(in) = 5,6,7,8-tetrahydromethanopterin + methyl-coenzyme M + 2 Na(+)(out). Its pathway is one-carbon metabolism; methanogenesis from CO(2); methyl-coenzyme M from 5,10-methylene-5,6,7,8-tetrahydromethanopterin: step 2/2. In terms of biological role, part of a complex that catalyzes the formation of methyl-coenzyme M and tetrahydromethanopterin from coenzyme M and methyl-tetrahydromethanopterin. This is an energy-conserving, sodium-ion translocating step. In Methanosarcina barkeri (strain Fusaro / DSM 804), this protein is Tetrahydromethanopterin S-methyltransferase subunit D.